The sequence spans 256 residues: Hemin import ATP-binding protein HmuV (256 aa).

Residues 2 to 239 enclose the ABC transporter domain; sequence IHAFAVSVIR…ANVREVYQVD (238 aa). ATP is bound at residue 34–41; that stretch reads GPNGAGKS.

Belongs to the ABC transporter superfamily. Heme (hemin) importer (TC 3.A.1.14.5) family. The complex is composed of two ATP-binding proteins (HmuV), two transmembrane proteins (HmuU) and a solute-binding protein (HmuT).

Its subcellular location is the cell inner membrane. Its function is as follows. Part of the ABC transporter complex HmuTUV involved in hemin import. Responsible for energy coupling to the transport system. This chain is Hemin import ATP-binding protein HmuV, found in Hahella chejuensis (strain KCTC 2396).